A 286-amino-acid polypeptide reads, in one-letter code: Pyridoxal kinase PdxY (286 aa).

Substrate is bound by residues S9 and 44 to 45 (TQ). The ATP site is built by D111, E148, and K181. Residue D222 participates in substrate binding.

This sequence belongs to the pyridoxine kinase family. PdxY subfamily. As to quaternary structure, homodimer. The cofactor is Mg(2+).

The catalysed reaction is pyridoxal + ATP = pyridoxal 5'-phosphate + ADP + H(+). It functions in the pathway cofactor metabolism; pyridoxal 5'-phosphate salvage; pyridoxal 5'-phosphate from pyridoxal: step 1/1. Its function is as follows. Pyridoxal kinase involved in the salvage pathway of pyridoxal 5'-phosphate (PLP). Catalyzes the phosphorylation of pyridoxal to PLP. This is Pyridoxal kinase PdxY from Actinobacillus succinogenes (strain ATCC 55618 / DSM 22257 / CCUG 43843 / 130Z).